The primary structure comprises 1007 residues: MELGRKLYIRSLVNVAGEPLSYFWPMRNFVYHNPLHELEGEHFSKAIKEGEEIFKGRAFLRRKDYIDFLNKGLIKEEKLLNSLKENVNLEGAPLTYEDLLRLIKDEKLKVYENTYLIREADTDLVEKLKGFFSENPKEVMENLFSEFGKKYTIADFVDLFFGESVNRTVNELLIKLSLDFLDEGQSVVEMPRRKEGFFRAFRELAKYNLRFIIRGGRELGELMESFEEPEEAIDNILKSYGIPEELWERYITLELAKLKGIAGYIKWRSHNKHYYFQRVYPSDLVEFLAVRLILEKGILEHRKKVYPFEPTYENFKRFFEEKIEEAFLTYEYATKRVPAELSSQVRENLKNAESFINTYLSRKAHINASNFALFLKDWLGERVKELSKEELKKVLEIYGEFQEKEGFIWLEALEDSLIERLTEGVLRANQEKEKPKAQALFCIDVRSERYRRNLEKIGNYETYGIAGFFGVPMAFVEIHKGHEEFLCPVLIKPRNVVLEIPKEMKEEYEVTHLLEHILHDLKQNVLTPYVTVEAIGFLFGFDFIGKTFMPYSYSKLKEKLLESKENVDYIINKPSREEVKELVNRVYETILKRVFEHEYGIKNPEKPLLEETLKVCLGETDYSERLELYGFKGEKQREFIERLRKVYKVDRGYWNILFERLSKLGFTLDEQASLIGRALKMVGLTEFAPFVFIIGHGSKSDNNPYESALDCGACGGASGLYNAIVFCRMANNPEVRKRIKEKFGINIPENTYFVPGLHNTTTDEVHFYDLEQFPQEVKEKLKEIKEDFDKASMLTASERYKELFDEEAEDELRKIYKVVENAYDWSQVRPEWGLSGNYAFVIGRRELTKHLNLEGKVFLHSYDYRVDRRGFLLEVILSGPAIVGQWINMEYYFSTTDNEVYGSGSKVYHNVVGRFGVISGNFSDLRTGLPTQTVYKEGKPLHIPARLIILLEAPYEFALSVINRVYAIRNLIQNEWVNFVIFDPESKKFYRYKKGSWNELKTEVKDG.

Positions 442, 444, 696, and 711 each coordinate Zn(2+).

Belongs to the inorganic carbon transporter (TC 9.A.2) DabA family. As to quaternary structure, forms a complex with DabB. It depends on Zn(2+) as a cofactor.

Its subcellular location is the cell inner membrane. In terms of biological role, part of an energy-coupled inorganic carbon pump. The polypeptide is Probable inorganic carbon transporter subunit DabA (Aquifex aeolicus (strain VF5)).